The sequence spans 610 residues: Chitinase 63 (610 aa).

A signal peptide spans 1 to 30 (MRFRHKAAALAATLALPLAGLVGLASPAQA). Positions 31–134 (ATSATATFQK…KINGGSCDGS (104 aa)) constitute a CBM2 domain. Disordered regions lie at residues 125–153 (KINGGSCDGSSVPGDEAPSAPGTPTASNI) and 208–239 (ARDTGDQTGPASGSVKVTTTGGDGGEPNPNPG). One can recognise a Fibronectin type-III domain in the interval 144 to 229 (APGTPTASNI…GSVKVTTTGG (86 aa)). Polar residues predominate over residues 213–224 (DQTGPASGSVKV). Positions 241 to 610 (EVKMGYFTNW…LVSAIDSGLK (370 aa)) constitute a GH18 domain. Chitin-binding positions include 313–314 (DQ) and 340–343 (GGWT). Catalysis depends on Glu383, which acts as the Proton donor. Residues Tyr384, 450–453 (MTYD), and Trp590 contribute to the chitin site.

This sequence belongs to the glycosyl hydrolase 18 family. Chitinase class II subfamily.

The catalysed reaction is Random endo-hydrolysis of N-acetyl-beta-D-glucosaminide (1-&gt;4)-beta-linkages in chitin and chitodextrins.. This is Chitinase 63 (chtA) from Streptomyces plicatus.